Here is a 293-residue protein sequence, read N- to C-terminus: MAGFGAAPDFNEGSKINASKNQQDEGKMFIGGLSWDTSKKDLTEYLSRFGEVLDCTIKTDPVTGRSRGFGFVLFKDAVSVDKVLETNEHKLDGKLIDPKRAKALKGKEPPKKVFVGGLSPETTEEQIKQYFGGFGEIENIELPIDTKTNERRGFCFVTYTGEEPVKKLLESRFHQIGTGKCEIKAAQPKEVYRQQQQKQQRGGRGAVTGRGGTRGRGRGQGWNQGYNNYYDQNYGGYGNNGSYGDQDYNSYSGYDYSGYSYGYNPGYTEYSGQQSTYGKARGGGNHQNNYQPY.

A disordered region spans residues 1–21 (MAGFGAAPDFNEGSKINASKN). RRM domains lie at 26 to 108 (GKMF…KGKE) and 111 to 188 (KKVF…AAQP). Disordered regions lie at residues 193-224 (RQQQQKQQRGGRGAVTGRGGTRGRGRGQGWNQ) and 274-293 (QSTYGKARGGGNHQNNYQPY). Gly residues predominate over residues 202-222 (GGRGAVTGRGGTRGRGRGQGW).

It is found in the nucleus. The protein localises to the cytoplasm. In terms of biological role, acts as a transcriptional regulator. Binds DNA and RNA. The polypeptide is Heterogeneous nuclear ribonucleoprotein D-like-A (hnrnpdl-a) (Xenopus laevis (African clawed frog)).